Consider the following 109-residue polypeptide: Hainantoxin-XVIII.2 (109 aa).

Residues 1-18 (MKLSIIIIVTSLVIAVVA) form the signal peptide. Positions 19–46 (FPSKDSKAIENDKTEQRMEIVVQETARA) are excised as a propeptide. 4 disulfides stabilise this stretch: C47/C62, C55/C68, C59/C108, and C61/C81.

The protein belongs to the neurotoxin 25 family. F7 subfamily. As to expression, expressed by the venom gland.

It is found in the secreted. Functionally, putative ion channel inhibitor. The sequence is that of Hainantoxin-XVIII.2 from Cyriopagopus hainanus (Chinese bird spider).